Here is a 691-residue protein sequence, read N- to C-terminus: Alpha-1,4-glucan:maltose-1-phosphate maltosyltransferase (691 aa).

The alpha-maltose 1-phosphate site is built by Lys280, Gln341, and Asp376. The Nucleophile role is filled by Asp411. An alpha-maltose 1-phosphate-binding site is contributed by Asn412. Catalysis depends on Glu440, which acts as the Proton donor. Position 550 to 551 (550 to 551 (KY)) interacts with alpha-maltose 1-phosphate.

It belongs to the glycosyl hydrolase 13 family. GlgE subfamily. Homodimer.

It carries out the reaction alpha-maltose 1-phosphate + [(1-&gt;4)-alpha-D-glucosyl](n) = [(1-&gt;4)-alpha-D-glucosyl](n+2) + phosphate. Functionally, maltosyltransferase that uses maltose 1-phosphate (M1P) as the sugar donor to elongate linear or branched alpha-(1-&gt;4)-glucans. Is involved in a branched alpha-glucan biosynthetic pathway from trehalose, together with TreS, Mak and GlgB. This Arcanobacterium haemolyticum (strain ATCC 9345 / DSM 20595 / CCM 5947 / CCUG 17215 / LMG 16163 / NBRC 15585 / NCTC 8452 / 11018) protein is Alpha-1,4-glucan:maltose-1-phosphate maltosyltransferase.